The primary structure comprises 271 residues: MFDDQQAPQLRLFVISDSIGETAQRMIHATLTQFPDISQIEIKKYPFIKNEEELMHILNRAKELNAVVVTTLVNPDFNIAGQHLAKKLQIPYIDYMSDLIGIIQQQTQCNPILESGALRKLDENYFKRIEAMEYAVKYDDGKHFTDIGEADALIVGVSRTSKTPLSMYLANKGYKIANIPLVLEVDIPDEVFKHKHLKVFGLTASPDYILNIRNERVKILGLSGPSNYNSMDRIREELIHAEEVFEKLNATVINTEYKSIEESAFYIEKCL.

ADP is bound at residue Gly156–Thr163.

The protein belongs to the pyruvate, phosphate/water dikinase regulatory protein family. PDRP subfamily.

The catalysed reaction is N(tele)-phospho-L-histidyl/L-threonyl-[pyruvate, phosphate dikinase] + ADP = N(tele)-phospho-L-histidyl/O-phospho-L-threonyl-[pyruvate, phosphate dikinase] + AMP + H(+). It catalyses the reaction N(tele)-phospho-L-histidyl/O-phospho-L-threonyl-[pyruvate, phosphate dikinase] + phosphate + H(+) = N(tele)-phospho-L-histidyl/L-threonyl-[pyruvate, phosphate dikinase] + diphosphate. Its function is as follows. Bifunctional serine/threonine kinase and phosphorylase involved in the regulation of the pyruvate, phosphate dikinase (PPDK) by catalyzing its phosphorylation/dephosphorylation. The sequence is that of Putative pyruvate, phosphate dikinase regulatory protein 1 from Staphylococcus saprophyticus subsp. saprophyticus (strain ATCC 15305 / DSM 20229 / NCIMB 8711 / NCTC 7292 / S-41).